Here is a 280-residue protein sequence, read N- to C-terminus: Cyanocobalamin reductase / alkylcobalamin dealkylase (280 aa).

Substrate is bound by residues Asp104, 115–118 (ILAQ), 129–131 (YYQ), Cys149, and Ile160. 4 positions are modified to phosphoserine: Ser245, Ser247, Ser273, and Ser277. Residues 256–280 (LSKKPQNPRRGWLSPTVSPPISPGP) are disordered.

The protein belongs to the MMACHC family. In terms of assembly, monomer in the absence of bound substrate. Homodimer; dimerization is triggered by binding to FMN or adenosylcobalamin. Interacts with LMBRD1 and ABCD4; the interaction ensures the transport of cobalamin from the lysosome to the cytoplasm. Forms a multiprotein complex with MMADHC, MTR and MTRR; the interaction with MTR could modulate MMACHC-dependent processing of cobalamin. Heterodimer with MMADHC; the interaction might play a role in the regulation of the balance between AdoCbl and MeCbl synthesis. FAD is required as a cofactor. FMN serves as cofactor.

Its subcellular location is the cytoplasm. It is found in the cytosol. The catalysed reaction is 2 cob(II)alamin-[cyanocobalamin reductase] + 2 hydrogen cyanide + NADP(+) = 2 cyanocob(III)alamin + 2 apo-[cyanocobalamin reductase] + NADPH + H(+). It catalyses the reaction apo-[alkylcobalamin reductase] + an R-cob(III)alamin + glutathione = cob(I)alamin-[alkylcobalamin reductase] + an S-substituted glutathione + H(+). The enzyme catalyses apo-[alkylcobalamin reductase] + methylcob(III)alamin + glutathione = S-methyl glutathione + cob(I)alamin-[alkylcobalamin reductase] + H(+). It carries out the reaction apo-[alkylcobalamin reductase] + adenosylcob(III)alamin + glutathione = S-adenosylglutathione + cob(I)alamin-[alkylcobalamin reductase] + H(+). Cobalamin (vitamin B12) cytosolic chaperone that catalyzes the reductive decyanation of cyanocob(III)alamin (cyanocobalamin, CNCbl) to yield cob(II)alamin and cyanide, using FAD or FMN as cofactors and NADPH as cosubstrate. Cyanocobalamin constitutes the inactive form of vitamin B12 introduced from the diet, and is converted into the active cofactors methylcobalamin (MeCbl) involved in methionine biosynthesis, and 5'-deoxyadenosylcobalamin (AdoCbl) involved in the TCA cycle. Forms a complex with the lysosomal transporter ABCD4 and its chaperone LMBRD1, to transport cobalamin across the lysosomal membrane into the cytosol. The processing of cobalamin in the cytosol occurs in a multiprotein complex composed of at least MMACHC, MMADHC, MTRR (methionine synthase reductase) and MTR (methionine synthase) which may contribute to shuttle safely and efficiently cobalamin towards MTR in order to produce methionine. Also acts as a glutathione transferase by catalyzing the dealkylation of the alkylcob(III)alamins MeCbl and AdoCbl, using the thiolate of glutathione for nucleophilic displacement to generate cob(I)alamin and the corresponding glutathione thioether. The conversion of incoming MeCbl or AdoCbl into a common intermediate cob(I)alamin is necessary to meet the cellular needs for both cofactors. Cysteine and homocysteine cannot substitute for glutathione in this reaction. This Bos taurus (Bovine) protein is Cyanocobalamin reductase / alkylcobalamin dealkylase (MMACHC).